The chain runs to 201 residues: Nuclear protein UL4 (201 aa).

It belongs to the alphaherpesvirinae HHV-1 UL4 family.

Its subcellular location is the host nucleus. The sequence is that of Nuclear protein UL4 from Human herpesvirus 2 (strain HG52) (HHV-2).